The chain runs to 296 residues: Acetaldehyde dehydrogenase (296 aa).

15-18 (SGNI) is a binding site for NAD(+). Catalysis depends on cysteine 132, which acts as the Acyl-thioester intermediate. Residues 164–172 (SAGPATRAN) and asparagine 274 contribute to the NAD(+) site.

Belongs to the acetaldehyde dehydrogenase family. Interacts with MhpE.

It catalyses the reaction acetaldehyde + NAD(+) + CoA = acetyl-CoA + NADH + H(+). It functions in the pathway aromatic compound metabolism; 3-phenylpropanoate degradation. Functionally, catalyzes the conversion of acetaldehyde to acetyl-CoA, using NAD(+) and coenzyme A. Is the final enzyme in the meta-cleavage pathway for the degradation of aromatic compounds. The chain is Acetaldehyde dehydrogenase from Pectobacterium atrosepticum (strain SCRI 1043 / ATCC BAA-672) (Erwinia carotovora subsp. atroseptica).